A 169-amino-acid polypeptide reads, in one-letter code: S-ribosylhomocysteine lyase (169 aa).

Fe cation-binding residues include His54, His58, and Cys128.

The protein belongs to the LuxS family. As to quaternary structure, homodimer. Fe cation serves as cofactor.

The enzyme catalyses S-(5-deoxy-D-ribos-5-yl)-L-homocysteine = (S)-4,5-dihydroxypentane-2,3-dione + L-homocysteine. Involved in the synthesis of autoinducer 2 (AI-2) which is secreted by bacteria and is used to communicate both the cell density and the metabolic potential of the environment. The regulation of gene expression in response to changes in cell density is called quorum sensing. Catalyzes the transformation of S-ribosylhomocysteine (RHC) to homocysteine (HC) and 4,5-dihydroxy-2,3-pentadione (DPD). This chain is S-ribosylhomocysteine lyase, found in Shewanella piezotolerans (strain WP3 / JCM 13877).